Reading from the N-terminus, the 332-residue chain is uncharacterized protein (332 aa).

A disordered region spans residues 159 to 256 (PLEISGRGGN…PRPHPWGPGP (98 aa)). Positions 201 to 231 (RPPSPRPPSPRPPHPRPPSPRPPHPRPPSPR) are enriched in pro residues.

Its subcellular location is the virion. This is an uncharacterized protein from Acanthamoeba polyphaga (Amoeba).